Reading from the N-terminus, the 379-residue chain is tRNA-specific 2-thiouridylase MnmA (379 aa).

ATP-binding positions include alanine 6–serine 13 and leucine 32. The active-site Nucleophile is cysteine 101. Cysteine 101 and cysteine 199 are oxidised to a cystine. Glycine 125 contributes to the ATP binding site. Residues lysine 148 to glutamine 150 form an interaction with tRNA region. Catalysis depends on cysteine 199, which acts as the Cysteine persulfide intermediate.

This sequence belongs to the MnmA/TRMU family.

It localises to the cytoplasm. The catalysed reaction is S-sulfanyl-L-cysteinyl-[protein] + uridine(34) in tRNA + AH2 + ATP = 2-thiouridine(34) in tRNA + L-cysteinyl-[protein] + A + AMP + diphosphate + H(+). Catalyzes the 2-thiolation of uridine at the wobble position (U34) of tRNA, leading to the formation of s(2)U34. This Arthrobacter sp. (strain FB24) protein is tRNA-specific 2-thiouridylase MnmA.